The sequence spans 186 residues: Hydra actinoporin-like toxin 6 (186 aa).

The first 21 residues, 1-21, serve as a signal peptide directing secretion; it reads MLVYVCLVVILIQLPFGAAGG. The short motif at 158–160 is the Cell attachment site element; it reads RAG.

It belongs to the actinoporin family. HALT subfamily. In terms of assembly, octamer or nonamer in membranes. Monomer in the soluble state. In vitro, interacts with folate receptor alpha (of target organism). Expressed female germline during oogenesis.

Its subcellular location is the nematocyst. The protein localises to the secreted. It localises to the target cell membrane. In terms of biological role, pore-forming protein that forms hydrophilic pores and causes cytolysis. Compared to equinatoxin-2 (AC P61914), it reveals lower cytolysis activity (5-12-fold difference, tested on erythrocytes), a larger pore size (probably 2-3 nm) and different affinity to membrane lipids (100-fold lower affinity to sphingomyelin). Binds to sulfatides. Shows cytolytic activity on HeLa cells, with a different potency than its paralogs (from most potent to less potent: HALT-4&gt;HALT-6~HALT-1&gt;HALT-3&gt;HALT-7&gt;HALT-2). Pore formation is a multi-step process that involves specific recognition of membrane lipid by a protein aromatic residues rich region, firm binding to the membrane (mainly driven by hydrophobic interactions) accompanied by the transfer of the N-terminal region to the lipid-water interface and finally pore formation after oligomerization of monomers. In vitro, binds to the folate receptor alpha (FOLR1), a GPI-anchored membrane protein that plays a major role in the uptake of folate/folic acid into cells via endocytosis, suggesting a possible involvement of this receptor in the mechanism of HALT-1-induced cell lysis. In vivo, does not cause visible paralysis in larvae of the blowfly Sarcophaga faculata, the most common arthropod prey of Hydra. In Hydra vulgaris (Hydra), this protein is Hydra actinoporin-like toxin 6.